Reading from the N-terminus, the 193-residue chain is Cerebellin-1 (193 aa).

The signal sequence occupies residues 1-21 (MLGVVELLLLGAAWLAGPARG). The N-linked (GlcNAc...) asparagine glycan is linked to Asn-23. Residues 34-38 (CLVVC) form an essential for interaction with NRXN1 and linker of two C1q trimers into disulfide-linked hexamers region. The 137-residue stretch at 57-193 (SGSAKVAFSA…TFSGFLVFPL (137 aa)) folds into the C1q domain. A necessary for interaction with CBLN3, and homotrimerization region spans residues 62 to 193 (VAFSAIRSTN…TFSGFLVFPL (132 aa)). N-linked (GlcNAc...) asparagine glycosylation occurs at Asn-79. The segment at 122–147 (YNRQTIQVSLMLNGWPVISAFAGDQD) is essential for interaction with GRID2.

In terms of assembly, homohexamer; disulfide-linked homotrimers. The trimers are assembled via the globular C1q domains. The trimers associate via N-terminal cysteine residues to form disulfide-linked hexamers. May form oligomers with CBLN2, CBLN3 and CBLN4 prior to secretion. Once secreted, does not interact with other CBLN family members. Interacts with GRID1. Interacts with NRXN1 and NRXN2 long (alpha) and short (beta) isoforms produced by alternative promoter usage. Competes with NLGN1 for NRXN1-binding. Weakly interacts with NRXN3 short isoform and not at all with NRXN3 long isoform. Interacts (via C1q domain) with GRID2; GRID2-binding is calcium-independent; CBLN1 hexamers anchor GRID2 N-terminal domain dimers to monomeric NRXN1 isoform beta; promotes synaptogenesis and mediates the D-Serine-dependent long term depression signals and AMPA receptor endocytosis. Post-translationally, the proteolytic processing to yield cerebellin seems to occur either prior to the secretion by presynaptic neurons and subsequent oligomerization or in some other location after release of the mature protein. In terms of processing, sialoglycoprotein.

The protein localises to the secreted. It is found in the postsynaptic cell membrane. In terms of biological role, required for synapse integrity and synaptic plasticity. During cerebellar synapse formation, essential for the matching and maintenance of pre- and post-synaptic elements at parallel fiber-Purkinje cell synapses, the establishment of the proper pattern of climbing fiber-Purkinje cell innervation, and induction of long-term depression at parallel fiber-Purkinje cell synapses. Plays a role as a synaptic organizer that acts bidirectionally on both pre- and post-synaptic components. On the one hand induces accumulation of synaptic vesicles in the pre-synaptic part by binding with NRXN1 and in other hand induces clustering of GRID2 and its associated proteins at the post-synaptic site through association of GRID2. NRXN1-CBLN1-GRID2 complex directly induces parallel fiber protrusions that encapsulate spines of Purkinje cells leading to accumulation of GRID2 and synaptic vesicles. Required for CBLN3 export from the endoplasmic reticulum and secretion. NRXN1-CBLN1-GRID2 complex mediates the D-Serine-dependent long term depression signals and AMPA receptor endocytosis. Essential for long-term maintenance but not establishment of excitatory synapses. Inhibits the formation and function of inhibitory GABAergic synapses in cerebellar Purkinje cells. Functionally, the cerebellin peptide exerts neuromodulatory functions. Directly stimulates norepinephrine release via the adenylate cyclase/PKA-dependent signaling pathway; and indirectly enhances adrenocortical secretion in vivo, through a paracrine mechanism involving medullary catecholamine release. In Bos taurus (Bovine), this protein is Cerebellin-1.